The following is a 302-amino-acid chain: MSDSRRVPITFQGLIQTLNQYWAEQGCVLIQPLDLEVGAGTFHPATFLRALGPEPWNAAYVQPSRRPTDGRYGENPNRLQRYYQYQVAMKPNPDNIQDLYLGSLQALGIDPLVHDLRFVEDNWESPTLGAWGLGWEVWLNGMEVTQFTYFQQAGGLECKPVLGEITYGLERLCMYLQSCDNVYELVWTYGPDGAAVTYGDVYHQNEVEQSTYNFEHANVAELFHRFDACEAEARHLVEVGLPLPAYEQVTKASHAFNLLDARRAISVTERQRYILRVRALAQGVAQAYYAQREKLGFPGVKK.

The protein belongs to the class-II aminoacyl-tRNA synthetase family. Tetramer of two alpha and two beta subunits.

It is found in the cytoplasm. The enzyme catalyses tRNA(Gly) + glycine + ATP = glycyl-tRNA(Gly) + AMP + diphosphate. The polypeptide is Glycine--tRNA ligase alpha subunit (Xanthomonas euvesicatoria pv. vesicatoria (strain 85-10) (Xanthomonas campestris pv. vesicatoria)).